The primary structure comprises 464 residues: A-type ATP synthase subunit B (464 aa).

This sequence belongs to the ATPase alpha/beta chains family. Has multiple subunits with at least A(3), B(3), C, D, E, F, H, I and proteolipid K(x).

It localises to the cell membrane. Component of the A-type ATP synthase that produces ATP from ADP in the presence of a proton gradient across the membrane. The B chain is a regulatory subunit. This is A-type ATP synthase subunit B from Methanococcus aeolicus (strain ATCC BAA-1280 / DSM 17508 / OCM 812 / Nankai-3).